Here is a 215-residue protein sequence, read N- to C-terminus: Cytochrome b6 (215 aa).

The helical transmembrane segment at 32-52 (IFYCLGGITLTCFLVQVATGF) threads the bilayer. Cysteine 35 is a binding site for heme c. Heme b contacts are provided by histidine 86 and histidine 100. 3 helical membrane-spanning segments follow: residues 90-110 (ASMM…TGGF), 116-136 (LTWV…VTGY), and 186-206 (LHTF…FPMI). Heme b is bound by residues histidine 187 and histidine 202.

Belongs to the cytochrome b family. PetB subfamily. As to quaternary structure, the 4 large subunits of the cytochrome b6-f complex are cytochrome b6, subunit IV (17 kDa polypeptide, PetD), cytochrome f and the Rieske protein, while the 4 small subunits are PetG, PetL, PetM and PetN. The complex functions as a dimer. The cofactor is heme b. It depends on heme c as a cofactor.

It localises to the plastid. It is found in the chloroplast thylakoid membrane. Its function is as follows. Component of the cytochrome b6-f complex, which mediates electron transfer between photosystem II (PSII) and photosystem I (PSI), cyclic electron flow around PSI, and state transitions. The polypeptide is Cytochrome b6 (Helianthus annuus (Common sunflower)).